We begin with the raw amino-acid sequence, 242 residues long: Tryptophan synthase alpha chain (242 aa).

Residues glutamate 32 and aspartate 43 each act as proton acceptor in the active site.

The protein belongs to the TrpA family. As to quaternary structure, tetramer of two alpha and two beta chains.

It is found in the plastid. The protein localises to the chloroplast. The enzyme catalyses (1S,2R)-1-C-(indol-3-yl)glycerol 3-phosphate + L-serine = D-glyceraldehyde 3-phosphate + L-tryptophan + H2O. It functions in the pathway amino-acid biosynthesis; L-tryptophan biosynthesis; L-tryptophan from chorismate: step 5/5. The alpha subunit is responsible for the aldol cleavage of indoleglycerol phosphate to indole and glyceraldehyde 3-phosphate. This Cyanidium caldarium (Red alga) protein is Tryptophan synthase alpha chain.